The sequence spans 71 residues: UPF0346 protein SPG_0874 (71 aa).

Belongs to the UPF0346 family.

In Streptococcus pneumoniae serotype 19F (strain G54), this protein is UPF0346 protein SPG_0874.